A 183-amino-acid polypeptide reads, in one-letter code: Bifunctional protein PyrR (183 aa).

Substrate contacts are provided by residues 42 to 43, Arg-87, 104 to 112, Arg-137, and Val-161; these read TR and DDVLYTGRT. A PRPP-binding motif is present at residues 100 to 112; the sequence is VILVDDVLYTGRT.

Belongs to the purine/pyrimidine phosphoribosyltransferase family. PyrR subfamily.

The catalysed reaction is UMP + diphosphate = 5-phospho-alpha-D-ribose 1-diphosphate + uracil. Regulates the transcription of the pyrimidine nucleotide (pyr) operon in response to exogenous pyrimidines. Its function is as follows. Also displays a weak uracil phosphoribosyltransferase activity which is not physiologically significant. The polypeptide is Bifunctional protein PyrR (Deinococcus radiodurans (strain ATCC 13939 / DSM 20539 / JCM 16871 / CCUG 27074 / LMG 4051 / NBRC 15346 / NCIMB 9279 / VKM B-1422 / R1)).